The sequence spans 646 residues: Interferon-induced GTP-binding protein MxA (646 aa).

The 274-residue stretch at 34–307 folds into the Dynamin-type G domain; it reads DLALPAIAVI…LVHHIQKSLP (274 aa). Residues 44–51 form a G1 motif region; the sequence is GDQSSGKS. Residue 44–51 coordinates GTP; that stretch reads GDQSSGKS. The G2 motif stretch occupies residues 69–71; it reads VTR. Residues 145–148 are G3 motif; the sequence is DLPG. GTP is bound by residues 145 to 149 and 214 to 217; these read DLPGI and TKPD. Positions 214-217 are G4 motif; that stretch reads TKPD. The segment at 246 to 249 is G5 motif; the sequence is RCRG. Residues 546–637 enclose the GED domain; the sequence is LREMRLHLKS…PLGHLLEVTF (92 aa).

This sequence belongs to the TRAFAC class dynamin-like GTPase superfamily. Dynamin/Fzo/YdjA family.

The protein resides in the cytoplasm. This Danio rerio (Zebrafish) protein is Interferon-induced GTP-binding protein MxA (mxa).